The chain runs to 614 residues: Dolichyl-diphosphooligosaccharide--protein glycosyltransferase subunit 1A (614 aa).

The N-terminal stretch at 1-25 is a signal peptide; it reads MKQSSVVDLLLLLLAIALLATPAFS. Topologically, residues 26 to 432 are lumenal; the sequence is DLVLSKVERR…QVYYKFSNIN (407 aa). 2 N-linked (GlcNAc...) asparagine glycosylation sites follow: asparagine 94 and asparagine 299. Lysine 311 is covalently cross-linked (Glycyl lysine isopeptide (Lys-Gly) (interchain with G-Cter in ubiquitin)). Asparagine 352 is a glycosylation site (N-linked (GlcNAc...) asparagine). Residues 433–453 form a helical membrane-spanning segment; that stretch reads LLSEPLMLISGFFILFITCII. The Cytoplasmic segment spans residues 454-614; the sequence is YTRADISISK…EDLLEFIDEI (161 aa).

This sequence belongs to the OST1 family. Component of the oligosaccharyltransferase (OST) complex.

It localises to the endoplasmic reticulum membrane. The protein operates within protein modification; protein glycosylation. Functionally, subunit of the oligosaccharyl transferase (OST) complex that catalyzes the initial transfer of a defined glycan (Glc(3)Man(9)GlcNAc(2) in eukaryotes) from the lipid carrier dolichol-pyrophosphate to an asparagine residue within an Asn-X-Ser/Thr consensus motif in nascent polypeptide chains, the first step in protein N-glycosylation. N-glycosylation occurs cotranslationally and the complex associates with the Sec61 complex at the channel-forming translocon complex that mediates protein translocation across the endoplasmic reticulum (ER). All subunits are required for a maximal enzyme activity. The protein is Dolichyl-diphosphooligosaccharide--protein glycosyltransferase subunit 1A (OST1A) of Arabidopsis thaliana (Mouse-ear cress).